A 527-amino-acid chain; its full sequence is Bifunctional purine biosynthesis protein PurH (527 aa).

Residues 8–156 (AGAKRPIRRA…KNHPSVAVVV (149 aa)) enclose the MGS-like domain.

It belongs to the PurH family.

It carries out the reaction (6R)-10-formyltetrahydrofolate + 5-amino-1-(5-phospho-beta-D-ribosyl)imidazole-4-carboxamide = 5-formamido-1-(5-phospho-D-ribosyl)imidazole-4-carboxamide + (6S)-5,6,7,8-tetrahydrofolate. The catalysed reaction is IMP + H2O = 5-formamido-1-(5-phospho-D-ribosyl)imidazole-4-carboxamide. It functions in the pathway purine metabolism; IMP biosynthesis via de novo pathway; 5-formamido-1-(5-phospho-D-ribosyl)imidazole-4-carboxamide from 5-amino-1-(5-phospho-D-ribosyl)imidazole-4-carboxamide (10-formyl THF route): step 1/1. It participates in purine metabolism; IMP biosynthesis via de novo pathway; IMP from 5-formamido-1-(5-phospho-D-ribosyl)imidazole-4-carboxamide: step 1/1. This Mycobacterium sp. (strain JLS) protein is Bifunctional purine biosynthesis protein PurH.